A 327-amino-acid polypeptide reads, in one-letter code: Cyclic AMP-responsive element-binding protein 1 (327 aa).

Disordered regions lie at residues 1–27 (MTMESGADNQQSGDAAVTEAENQQMTV) and 94–113 (SEDSQESVDSVTDSQKRREI). A KID domain is found at 87-146 (QISTIAESEDSQESVDSVTDSQKRREILSRRPSYRKILNDLSSDAPGVPRIEEEKSEEET). Ser119 carries the phosphoserine; by CaMK1, CaMK2, CaMK4, PKB/AKT1 or PKB/AKT2, RPS6KA3, RPS6KA4, RPS6KA5 and SGK1 modification. Lys122 is covalently cross-linked (Glycyl lysine isopeptide (Lys-Gly) (interchain with G-Cter in SUMO2)). The segment at 126 to 151 (DLSSDAPGVPRIEEEKSEEETSAPAI) is disordered. Ser128 is modified (phosphoserine; by CaMK2). Residue Ser257 is modified to Phosphoserine; by HIPK2. The region spanning 269-327 (ARKREVRLMKNREAARECRRKKKEYVKCLENRVAVLENQNKTLIEELKALKDLYCHKSD) is the bZIP domain. Residues 270-295 (RKREVRLMKNREAARECRRKKKEYVK) are basic motif. Residues Lys271 and Lys290 each participate in a glycyl lysine isopeptide (Lys-Gly) (interchain with G-Cter in SUMO1) cross-link. The tract at residues 297–318 (LENRVAVLENQNKTLIEELKAL) is leucine-zipper.

This sequence belongs to the bZIP family. In terms of assembly, interacts with PPRC1. Binds DNA as a dimer. This dimer is stabilized by magnesium ions. Interacts, through the bZIP domain, with the coactivators CRTC1/TORC1, CRTC2/TORC2 and CRTC3/TORC3. Interacts (phosphorylated form) with TOX3. When phosphorylated on Ser-119, binds CREBBP. Interacts with ARRB1. Binds to HIPK2. Interacts with SGK1. Interacts with CREBL2; regulates CREB1 phosphorylation, stability and transcriptional activity. Interacts with TSSK4; this interaction facilitates phosphorylation on Ser-119. Forms a complex with KMT2A and CREBBP. Interacts with TOX4; CREB1 is required for full induction of TOX4-dependent activity and the interaction is increased by cAMP and inhibited by insulin. Post-translationally, phosphorylation of Ser-119 allows CREBBP binding. Stimulated by phosphorylation. Phosphorylated Ser-128 can be detected in the suprachiasmatic nucleus (SCN), the amygdala, the cortex, and the hippocampus but not in the striatum nor in the cerebellum. In the SCN, phosphorylation of Ser-128 and Ser-119 are stimulated by light exposure and submitted to circadian oscillations. In the retina, only phosphorylation of Ser-119 can be detected upon light exposure. Phosphorylation of both Ser-119 and Ser-128 in the SCN regulates the activity of CREB and participates in circadian rhythm generation. Phosphorylated upon calcium influx by CaMK4 and CaMK2 on Ser-119. CaMK4 is much more potent than CAMK2 in activating CREB. Phosphorylated by CaMK2 on Ser-128. Phosphorylation of Ser-128 blocks CREB-mediated transcription even when Ser-119 is phosphorylated. Phosphorylated by CaMK1. Phosphorylation of Ser-271 by HIPK2 in response to genotoxic stress promotes CREB1 activity, facilitating the recruitment of the coactivator CBP. Phosphorylated at Ser-119 by RPS6KA3, RPS6KA4 and RPS6KA5 in response to mitogenic or stress stimuli. CREBL2 positively regulates phosphorylation at Ser-119 thereby stimulating CREB1 transcriptional activity. In liver, phosphorylation is induced by fasting or glucagon in a circadian fashion. Phosphorylated by TSSK4 on Ser-119. In terms of processing, sumoylated with SUMO1. Sumoylation on Lys-290, but not on Lys-271, is required for nuclear localization of this protein. Sumoylation is enhanced under hypoxia, promoting nuclear localization and stabilization. Expressed in the heart (at protein level).

The protein localises to the nucleus. Phosphorylation-dependent transcription factor that stimulates transcription upon binding to the DNA cAMP response element (CRE), a sequence present in many viral and cellular promoters. Transcription activation is enhanced by the TORC coactivators which act independently of Ser-119 phosphorylation. Involved in different cellular processes including the synchronization of circadian rhythmicity and the differentiation of adipose cells. Regulates the expression of apoptotic and inflammatory response factors in cardiomyocytes in response to ERFE-mediated activation of AKT signaling. This Mus musculus (Mouse) protein is Cyclic AMP-responsive element-binding protein 1 (Creb1).